A 272-amino-acid chain; its full sequence is SKA complex subunit 1 homolog (272 aa).

The stretch at 48 to 75 forms a coiled coil; it reads ALSSMELQVQSIKDRLREETEAIPKAKK.

It belongs to the SKA1 family.

The chain is SKA complex subunit 1 homolog from Arabidopsis thaliana (Mouse-ear cress).